The primary structure comprises 843 residues: Complement component C7 (843 aa).

Residues 1–22 (MKAMSLVFLVGLIGEFQVFSSA) form the signal peptide. Positions 27 to 80 (NCQWDSYAPWSECNGCTKTQTRRRPVAVYGQYGGHPCVGSTFETQSCEPTRGCP) constitute a TSP type-1 1 domain. 7 disulfide bridges follow: Cys28-Cys63, Cys39-Cys73, Cys42-Cys79, Cys85-Cys96, Cys91-Cys109, Cys103-Cys119, and Cys128-Cys165. A glycan (C-linked (Man) tryptophan) is linked at Trp36. The LDL-receptor class A domain occupies 83–121 (EGCGERFRCFSGQCISKSLVCNGDSDCEEDSADEDRCED). The disordered stretch occupies residues 105–142 (GDSDCEEDSADEDRCEDSESRPSCDLSKPPPNIELTGN). Positions 107-120 (SDCEEDSADEDRCE) are enriched in acidic residues. An MACPF domain is found at 124–456 (SRPSCDLSKP…EYLDEFDSCH (333 aa)). Asn202 carries an N-linked (GlcNAc...) asparagine glycan. 21 cysteine pairs are disulfide-bonded: Cys337–Cys353, Cys433–Cys560, Cys455–Cys505, Cys457–Cys473, Cys460–Cys475, Cys477–Cys486, Cys512–Cys545, Cys523–Cys535, Cys571–Cys613, Cys599–Cys626, Cys631–Cys673, Cys659–Cys688, Cys702–Cys713, Cys715–Cys750, Cys721–Cys743, Cys728–Cys763, Cys773–Cys782, Cys776–Cys789, Cys791–Cys825, Cys797–Cys818, and Cys805–Cys838. The region spanning 457–487 (CQPCQNGGMASVEGTQCQCHCKPNTFGVACE) is the EGF-like domain. One can recognise a TSP type-1 2 domain in the interval 500-549 (DGGWSCWSSWGPCAQGKKTRSRKCNNPPPSGGGKSCIGETSESRQCEDED). C-linked (Man) tryptophan glycans are attached at residues Trp503, Trp506, and Trp509. The disordered stretch occupies residues 516-539 (KKTRSRKCNNPPPSGGGKSCIGET). CCP stretches follow at residues 545–615 (CEDE…RCGE) and 616–693 (DLQW…RKEA). 2 Sushi domains span residues 569 to 628 (EFCP…HCQK) and 629 to 690 (IACV…QCVR). Factor I module (FIM) regions lie at residues 695–770 (LAKK…GSAE) and 771–843 (KACG…PEAP). N-linked (GlcNAc...) asparagine glycosylation is present at Asn754.

This sequence belongs to the complement C6/C7/C8/C9 family. In terms of assembly, monomer or dimer; as a C5b-7 complex it can also form multimeric rosettes. Component of the membrane attack complex (MAC), composed of complement C5b, C6, C7, C8A, C8B, C8G and multiple copies of the pore-forming subunit C9. Post-translationally, C-, N- and O-glycosylated. O-glycosylated with core 1 or possibly core 8 glycans. Detected in plasma (at protein level). Bone marrow, heart, intestine, lung, spleen, kidney, liver and thymus.

It is found in the secreted. It localises to the target cell membrane. With respect to regulation, membrane attack complex (MAC) assembly is inhibited by CD59, thereby protecting self-cells from damage during complement activation. MAC assembly is also inhibited by clusterin (CLU) chaperones that inhibit polymerization of C9. In terms of biological role, component of the membrane attack complex (MAC), a multiprotein complex activated by the complement cascade, which inserts into a target cell membrane and forms a pore, leading to target cell membrane rupture and cell lysis. The MAC is initiated by proteolytic cleavage of C5 into complement C5b in response to the classical, alternative, lectin and GZMK complement pathways. The complement pathways consist in a cascade of proteins that leads to phagocytosis and breakdown of pathogens and signaling that strengthens the adaptive immune system. C7 serves as a membrane anchor. During MAC assembly, associates with C5b and C6 to form the C5b-7 complex, a key lipophilic precursor of the MAC complex, which associates with the outer leaflet and reduces the energy for membrane bending. The protein is Complement component C7 (C7) of Sus scrofa (Pig).